Consider the following 120-residue polypeptide: HTH-type transcriptional regulator NmtR (120 aa).

In terms of domain architecture, HTH arsR-type spans 15–109; that stretch reads LDSQAAAQVA…EAIYHSEHLH (95 aa). Residues 49–72 constitute a DNA-binding region (H-T-H motif); that stretch reads VTDLAEAIGMEQSAVSHQLRVLRN. Ni(2+)-binding residues include D91, H93, H104, and H107.

In terms of assembly, homodimer.

Its activity is regulated as follows. Binding to DNA is inhibited by nickel and, to some extent, cobalt ions. Represses transcription of ctpJ/nmtA, by binding to its promoter region. In Mycobacterium tuberculosis (strain ATCC 25618 / H37Rv), this protein is HTH-type transcriptional regulator NmtR (nmtR).